Here is a 906-residue protein sequence, read N- to C-terminus: MCRIAGAPRTLLPLLAALLQASVEASGEIALCKTGFPEDVYSAVLSKDVHEGQPLLSVKFSNCNGKRKVQYESSEPADFKVDEDGMVYAVRSFPLSSEHSKFLIYAQDKETQEKWQVAVKLSLKPTLTEESVKESPEIEEIVFPRQLTKHNGYLQRQKRDWVIPPINLPENSRGPFPQELVRIRSDRDKNLSLRYSVTGPGADQPPTGIFIINPISGQLSVTKPLDRELIARFHLRAHAVDINGNQVENPIDIVINVIDMNDNRPEFLHQVWNGTVPEGSKPGTYVMTVTAIDADDPNALNGMLRYRILSQAPSTPSPNMFTINNETGDIITVAAGLDREKVQQYTLIIQATDMEGNPTYGLSNTATAIITVTDVNDNPPEFTAMTFYGEVPENRVDVIVANLTVTDKDQPHTQAWNAVYRISGGDPAGRFAIQTDPNSNDGLVTVVKPIDFETNRMFVLTVAAENQVPLAKGIQHPPQSTATVSVTVIDVNENPYFAPNPKIIRQEEGLHSGTMLTTFTAQDPDRYMQQNIRYTKLSDPANWLKIDPVNGQITTIAVLDRESPNVKNNIYNATFLASDNGIPPMSGTGTLQIYLLDINDNAPQVLPQEAETCETPDPNSINITALDYDIDPNAGPFAFDLPLSPGTIKRNWTITRLNGDFAQLNLKIKFLEAGIYEVPIIITDSGNPPKSNISILRVKVCQCDSNGDCTDVDRIVGAGLGTGAIIAILLCIIILLILVLMFVVWMKRRDKERQAKQLLIDPEDDVRDNILKYDEEGGGEEDQDYDLSQLQQPDTVEPDAIKPVGIRRLDERPIHAEPQYPVRSAAPHPGDIGDFINEGLKAADNDPTAPPYDSLLVFDYEGSGSTAGSLSSLNSSSSGGEQDYDYLNDWGPRFKKLAEMYGGGDD.

Residues 1-25 (MCRIAGAPRTLLPLLAALLQASVEA) form the signal peptide. Positions 26–159 (SGEIALCKTG…HNGYLQRQKR (134 aa)) are excised as a propeptide. Phosphoserine occurs at positions 96 and 135. Cadherin domains lie at 160-267 (DWVI…RPEF), 268-382 (LHQV…PPEF), 383-497 (TAMT…NPYF), 498-603 (APNP…DNAP), and 604-714 (QVLP…DVDR). Topologically, residues 160–724 (DWVIPPINLP…IVGAGLGTGA (565 aa)) are extracellular. Residue Glu-170 participates in Ca(2+) binding. An N-linked (GlcNAc...) asparagine glycan is attached at Asn-190. Ca(2+)-binding residues include Asp-226, Glu-228, Asp-259, Met-260, Asn-261, Asp-262, and Asn-263. An N-linked (GlcNAc...) asparagine glycan is attached at Asn-273. Residues Asp-293, Asp-295, and Asn-301 each contribute to the Ca(2+) site. Residue Asn-325 is glycosylated (N-linked (GlcNAc...) asparagine). Asp-353 contacts Ca(2+). Residues Asn-402, Asn-572, Asn-622, Asn-651, and Asn-692 are each glycosylated (N-linked (GlcNAc...) asparagine). The helical transmembrane segment at 725-745 (IIAILLCIIILLILVLMFVVW) threads the bilayer. Over 746–906 (MKRRDKERQA…LAEMYGGGDD (161 aa)) the chain is Cytoplasmic. Residues 863–880 (SGSTAGSLSSLNSSSSGG) show a composition bias toward low complexity. The tract at residues 863-884 (SGSTAGSLSSLNSSSSGGEQDY) is disordered.

Homodimer (via extracellular region). Can also form heterodimers with other cadherins (via extracellular region). Dimerization occurs in trans, i.e. with a cadherin chain from another cell. Interacts with CDCP1. Interacts with PCDH8; this complex may also include TAOK2. The interaction with PCDH8 may lead to internalization through TAOK2/p38 MAPK pathway. Identified in a complex containing FGFR4, NCAM1, CDH2, PLCG1, FRS2, SRC, SHC1, GAP43 and CTTN. May interact with OBSCN (via protein kinase domain 2). Interacts with FBXO45. In terms of processing, cleaved by MMP24. Ectodomain cleavage leads to the generation of a soluble 90 kDa N-terminal soluble fragment and a 45 kDa membrane-bound C-terminal fragment 1 (CTF1), which is further cleaved by gamma-secretase into a 35 kDa. Cleavage in neural stem cells by MMP24 affects CDH2-mediated anchorage of neural stem cells to ependymocytes in the adult subependymal zone, leading to modulate neural stem cell quiescence. Post-translationally, may be phosphorylated by OBSCN.

Its subcellular location is the cell membrane. The protein resides in the sarcolemma. It localises to the cell junction. It is found in the cell surface. The protein localises to the desmosome. Its subcellular location is the adherens junction. Functionally, calcium-dependent cell adhesion protein; preferentially mediates homotypic cell-cell adhesion by dimerization with a CDH2 chain from another cell. Cadherins may thus contribute to the sorting of heterogeneous cell types. Acts as a regulator of neural stem cells quiescence by mediating anchorage of neural stem cells to ependymocytes in the adult subependymal zone: upon cleavage by MMP24, CDH2-mediated anchorage is affected, leading to modulate neural stem cell quiescence. Plays a role in cell-to-cell junction formation between pancreatic beta cells and neural crest stem (NCS) cells, promoting the formation of processes by NCS cells. Required for proper neurite branching. Required for pre- and postsynaptic organization. CDH2 may be involved in neuronal recognition mechanism. In hippocampal neurons, may regulate dendritic spine density. The sequence is that of Cadherin-2 (CDH2) from Otolemur garnettii (Small-eared galago).